A 441-amino-acid polypeptide reads, in one-letter code: Glutamyl-tRNA reductase (441 aa).

Substrate-binding positions include T47–R50, S110, E115–E117, and Q121. C48 acts as the Nucleophile in catalysis. NADP(+) is bound at residue G192–A197.

This sequence belongs to the glutamyl-tRNA reductase family. As to quaternary structure, homodimer.

The catalysed reaction is (S)-4-amino-5-oxopentanoate + tRNA(Glu) + NADP(+) = L-glutamyl-tRNA(Glu) + NADPH + H(+). It functions in the pathway porphyrin-containing compound metabolism; protoporphyrin-IX biosynthesis; 5-aminolevulinate from L-glutamyl-tRNA(Glu): step 1/2. Catalyzes the NADPH-dependent reduction of glutamyl-tRNA(Glu) to glutamate 1-semialdehyde (GSA). The sequence is that of Glutamyl-tRNA reductase from Pseudarthrobacter chlorophenolicus (strain ATCC 700700 / DSM 12829 / CIP 107037 / JCM 12360 / KCTC 9906 / NCIMB 13794 / A6) (Arthrobacter chlorophenolicus).